A 676-amino-acid polypeptide reads, in one-letter code: DNA ligase (676 aa).

NAD(+) contacts are provided by residues Asp35–Asp39, Ser84–Leu85, and Glu118. The N6-AMP-lysine intermediate role is filled by Lys120. NAD(+) is bound by residues Arg141, Glu184, Lys299, and Lys323. Zn(2+) is bound by residues Cys417, Cys420, Cys435, and Cys441. The BRCT domain occupies Leu600–Leu676.

It belongs to the NAD-dependent DNA ligase family. LigA subfamily. Mg(2+) is required as a cofactor. Requires Mn(2+) as cofactor.

The enzyme catalyses NAD(+) + (deoxyribonucleotide)n-3'-hydroxyl + 5'-phospho-(deoxyribonucleotide)m = (deoxyribonucleotide)n+m + AMP + beta-nicotinamide D-nucleotide.. Its function is as follows. DNA ligase that catalyzes the formation of phosphodiester linkages between 5'-phosphoryl and 3'-hydroxyl groups in double-stranded DNA using NAD as a coenzyme and as the energy source for the reaction. It is essential for DNA replication and repair of damaged DNA. The protein is DNA ligase of Chlorobium phaeobacteroides (strain DSM 266 / SMG 266 / 2430).